The chain runs to 264 residues: Small ribosomal subunit protein uS2 (264 aa).

The tract at residues 233–264 (AQTQAGGKAEQEAPATEEAADAQTEEAATPAE) is disordered.

Belongs to the universal ribosomal protein uS2 family.

This chain is Small ribosomal subunit protein uS2, found in Psychrobacter arcticus (strain DSM 17307 / VKM B-2377 / 273-4).